Here is a 322-residue protein sequence, read N- to C-terminus: MLNSFKLSLQYILPKLWLTRLAGWGASKRAGWLTKLVIDLFVKYYKVDMKEAQKPDTASYRTFNEFFVRPLRDEVRPIDTDPNVLVMPADGVISQLGKIEEDKILQAKGHNYSLEALLAGNYLMADLFRNGTFVTTYLSPRDYHRVHMPCNGILREMIYVPGDLFSVNHLTAQNVPNLFARNERVICLFDTEFGPMAQILVGATIVGSIETVWAGTITPPREGIIKRWTWPAGENDGSVALLKGQEMGRFKLGSTVINLFAPGKVNLVEQLESLSVTKIGQPLAVSTETFVTPDAEPAPLPAEEIEAEHYASPLVDDKKDQV.

Catalysis depends on charge relay system; for autoendoproteolytic cleavage activity residues Asp90, His147, and Ser254. The active-site Schiff-base intermediate with substrate; via pyruvic acid; for decarboxylase activity is Ser254. Ser254 carries the post-translational modification Pyruvic acid (Ser); by autocatalysis.

Belongs to the phosphatidylserine decarboxylase family. PSD-B subfamily. Prokaryotic type I sub-subfamily. Heterodimer of a large membrane-associated beta subunit and a small pyruvoyl-containing alpha subunit. Pyruvate serves as cofactor. Is synthesized initially as an inactive proenzyme. Formation of the active enzyme involves a self-maturation process in which the active site pyruvoyl group is generated from an internal serine residue via an autocatalytic post-translational modification. Two non-identical subunits are generated from the proenzyme in this reaction, and the pyruvate is formed at the N-terminus of the alpha chain, which is derived from the carboxyl end of the proenzyme. The autoendoproteolytic cleavage occurs by a canonical serine protease mechanism, in which the side chain hydroxyl group of the serine supplies its oxygen atom to form the C-terminus of the beta chain, while the remainder of the serine residue undergoes an oxidative deamination to produce ammonia and the pyruvoyl prosthetic group on the alpha chain. During this reaction, the Ser that is part of the protease active site of the proenzyme becomes the pyruvoyl prosthetic group, which constitutes an essential element of the active site of the mature decarboxylase.

The protein localises to the cell membrane. It carries out the reaction a 1,2-diacyl-sn-glycero-3-phospho-L-serine + H(+) = a 1,2-diacyl-sn-glycero-3-phosphoethanolamine + CO2. It functions in the pathway phospholipid metabolism; phosphatidylethanolamine biosynthesis; phosphatidylethanolamine from CDP-diacylglycerol: step 2/2. In terms of biological role, catalyzes the formation of phosphatidylethanolamine (PtdEtn) from phosphatidylserine (PtdSer). In Shigella dysenteriae serotype 1 (strain Sd197), this protein is Phosphatidylserine decarboxylase proenzyme.